Consider the following 166-residue polypeptide: Probable chemoreceptor glutamine deamidase CheD (166 aa).

Belongs to the CheD family.

The enzyme catalyses L-glutaminyl-[protein] + H2O = L-glutamyl-[protein] + NH4(+). Its function is as follows. Probably deamidates glutamine residues to glutamate on methyl-accepting chemotaxis receptors (MCPs), playing an important role in chemotaxis. The protein is Probable chemoreceptor glutamine deamidase CheD of Desulforamulus reducens (strain ATCC BAA-1160 / DSM 100696 / MI-1) (Desulfotomaculum reducens).